The sequence spans 549 residues: OBERON-like protein (549 aa).

The interval 1 to 56 (MLPPRQQPRPGGLQTSLSLVSPDACGSPNPQERGSTSDQARDSPSESASSRETWPT) is disordered. 2 stretches are compositionally biased toward polar residues: residues 28-38 (PNPQERGSTSD) and 45-56 (SESASSRETWPT). The segment at 224 to 288 (LCMCVICYKF…LFRCHACSRT (65 aa)) adopts a PHD-type zinc-finger fold. Positions 394–520 (VQEAIRKMEA…YLFEKIKLQE (127 aa)) form a coiled coil. A disordered region spans residues 519-549 (QESSRASQSSAGGNDPSQMMYSKIQDLIKNM). The span at 521–538 (SSRASQSSAGGNDPSQMM) shows a compositional bias: polar residues.

Self-interacts and probably forms heteromers. Binds to VPg of pea seed borne mosaic virus (PSbMV), turnip mosaic virus (TuMV) and lettuce mosaic virus (LMV), but not with VPg of tobacco etch virus (TEV), cowpea mosaic virus (CPMV), tomato black ring virus (TBRV) and grapevine fan leaf virus (GFLV).

It is found in the nucleus. In terms of biological role, required for the maintenance and/or establishment of both the shoot and root meristems, probably by controlling the expression of the meristem genes and of genes required for auxin responses. Involved in the development of the basal pole and in auxin-mediated root and vascular development in the embryo. Confers sensitivity to turnip mosaic virus (TuMV) probably by promoting viral movement and multiplication via interaction with TuMV VPg. The polypeptide is OBERON-like protein (PVIP) (Nicotiana benthamiana).